Here is a 214-residue protein sequence, read N- to C-terminus: LOB domain-containing protein 7 (214 aa).

The LOB domain occupies T12 to I113.

Belongs to the LOB domain-containing protein family.

In Arabidopsis thaliana (Mouse-ear cress), this protein is LOB domain-containing protein 7 (LBD7).